The sequence spans 194 residues: Large ribosomal subunit protein bL9 (194 aa).

A disordered region spans residues 167–194 (EDRAAEAEAASDMAAGGAGSFEGDHYES).

This sequence belongs to the bacterial ribosomal protein bL9 family.

Its function is as follows. Binds to the 23S rRNA. The protein is Large ribosomal subunit protein bL9 of Caulobacter sp. (strain K31).